Reading from the N-terminus, the 124-residue chain is Small ribosomal subunit protein bS6 (124 aa).

A disordered region spans residues 96 to 124 (ETGPSPMMKEVQREEAKKAAAAQPAEAQA). A compositionally biased stretch (low complexity) spans 114 to 124 (AAAAQPAEAQA).

This sequence belongs to the bacterial ribosomal protein bS6 family.

In terms of biological role, binds together with bS18 to 16S ribosomal RNA. This Burkholderia orbicola (strain AU 1054) protein is Small ribosomal subunit protein bS6.